A 513-amino-acid polypeptide reads, in one-letter code: Membrane-bound transcription factor site-2 protease homolog (513 aa).

Residues M1–W60 lie on the Cytoplasmic side of the membrane. Residues F61–L81 traverse the membrane as a helical segment. Residues Q82 to S107 lie on the Lumenal side of the membrane. A helical membrane pass occupies residues L108–G128. H125 lines the Zn(2+) pocket. Residue E126 is part of the active site. Residue H129 coordinates Zn(2+). Residues H129–G137 lie on the Cytoplasmic side of the membrane. Residues I138–F158 traverse the membrane as a helical segment. The Lumenal segment spans residues D159–N182. A helical membrane pass occupies residues A183–F203. Residues Y204–S437 lie on the Cytoplasmic side of the membrane. Residues L438–Y458 form a helical membrane-spanning segment. At L459 to Q485 the chain is on the lumenal side. The chain crosses the membrane as a helical span at residues V486–G506. The Cytoplasmic segment spans residues L507–W513.

It belongs to the peptidase M50A family. Requires Zn(2+) as cofactor. In terms of tissue distribution, expressed in the vasculature of roots, cotyledons and leaves.

It is found in the golgi apparatus membrane. Functionally, metalloprotease that catalyzes the second step (site-2 cleavage) in the proteolytic activation of various factors, after site-1 cleavage. Part of a regulated intramembrane proteolysis (RIP) cascade. After ER stress, cleaves BZIP17 and BZIP28 proteins which function as stress sensors and transducers in ER stress signaling pathway. The N-terminal bZIP component is translocated to the nucleus, where it activates the expression and production of ER chaperones, as well as proteins involved in brassinosteroid (BR) signaling, which is required for stress acclimation and growth. In Arabidopsis thaliana (Mouse-ear cress), this protein is Membrane-bound transcription factor site-2 protease homolog (S2P).